Reading from the N-terminus, the 503-residue chain is Maturase K (503 aa).

It belongs to the intron maturase 2 family. MatK subfamily.

Its subcellular location is the plastid. It is found in the chloroplast. Usually encoded in the trnK tRNA gene intron. Probably assists in splicing its own and other chloroplast group II introns. This chain is Maturase K, found in Panax quinquefolius (American ginseng).